Reading from the N-terminus, the 131-residue chain is Con-Ins Q1b (131 aa).

Residues 1-24 form the signal peptide; that stretch reads MTTSSYFLLVALGLLLYLCQSSFG. Disulfide bonds link Cys-29–Cys-107, Cys-41–Cys-110, Cys-53–Cys-123, and Cys-109–Cys-114. The propeptide at 59 to 92 is c peptide; it reads LQGGTDDARKKRGRASLLRKRRGFLSMLKARAKR. A 4-carboxyglutamate; partial modification is found at Glu-118. Position 130 is a serine amide (Ser-130).

It belongs to the insulin family. As to quaternary structure, heterodimer of A and B chains; disulfide-linked. In terms of tissue distribution, expressed by the venom gland.

The protein localises to the secreted. Functionally, this venom insulin facilitates prey capture by rapidly inducing hypoglycemic shock. Intraperitoneal injection of this peptide into zebrafish lowers blood glucose with the same potency than human insulin. In vivo, when applied to water, this peptide reduces overall locomotor activity of zebrafish larvae, observed as a significant decrease in the percentage of time spent swimming and movement frequency. This is Con-Ins Q1b from Conus quercinus (Oak cone).